The sequence spans 340 residues: Phosphoribosylformylglycinamidine cyclo-ligase (340 aa).

Belongs to the AIR synthase family.

Its subcellular location is the cytoplasm. It carries out the reaction 2-formamido-N(1)-(5-O-phospho-beta-D-ribosyl)acetamidine + ATP = 5-amino-1-(5-phospho-beta-D-ribosyl)imidazole + ADP + phosphate + H(+). It functions in the pathway purine metabolism; IMP biosynthesis via de novo pathway; 5-amino-1-(5-phospho-D-ribosyl)imidazole from N(2)-formyl-N(1)-(5-phospho-D-ribosyl)glycinamide: step 2/2. The sequence is that of Phosphoribosylformylglycinamidine cyclo-ligase from Streptococcus pyogenes serotype M1.